Consider the following 217-residue polypeptide: GrpE protein homolog 1, mitochondrial (217 aa).

The transit peptide at 1–27 (MAARCVRLARRSLPALALSFRPSPRLL) directs the protein to the mitochondrion. The tract at residues 37-56 (GQNLDEDLGHCEPKTDPPSA) is disordered. An N6-acetyllysine; alternate modification is found at K94. K94 is subject to N6-succinyllysine; alternate. K100 carries the post-translational modification N6-acetyllysine. K120 carries the N6-succinyllysine modification. N6-acetyllysine; alternate is present on K215. K215 is subject to N6-succinyllysine; alternate.

It belongs to the GrpE family. As to quaternary structure, probable component of the PAM complex at least composed of a mitochondrial HSP70 protein, GRPEL1 or GRPEL2, TIMM44, TIMM16/PAM16 and TIMM14/DNAJC19. Binds to HSP70, HSC70 and HSJ1B.

It localises to the mitochondrion matrix. Its function is as follows. Essential component of the PAM complex, a complex required for the translocation of transit peptide-containing proteins from the inner membrane into the mitochondrial matrix in an ATP-dependent manner. Seems to control the nucleotide-dependent binding of mitochondrial HSP70 to substrate proteins. The chain is GrpE protein homolog 1, mitochondrial (Grpel1) from Mus musculus (Mouse).